The sequence spans 816 residues: MESKVVALNRESRRWKKSSFNELLKRARNQKSTICNRFTRKNTPNILVTFTSRLTLLRPTFFNFACWHSAMEIFESMSFSVKFDKELLPIGRHGLTAGWLIESLGQLLNSDNIRNIKCSQLGTDGFVSQIMRVVIEFTNNQTKKYIVKMPETTNIKAALEKTTQQKMPEGADEQFIGGLTMFFNREVEYYAMEKIPGLRTPKCYHAQQWDNGKTTGAIVMQDLEGMVSVPYYESLNLQQIASIGSQMLNLHLFSIGMSDEWRQKFPFPMELIDTVSNMTDIVKLYVSRNPELEEGFSKVEKMYQDRELFTKVLRDSHKSLGIDDFLCHGDLWFYNLMWIPRKSGSEVASNHLGSIIDWQNVHTGNICEDFCHMLTFCCDTEIRRQAENTFLPYYYNQLKAKAVEAGKKLNLTLNQFLRAYRRNFIAHALHLPFIVSIMLCVKPADDEIVQKIRNQMSGALWSAAQFAVTSYVCVRVLKFLYIMCKSVLVHFITPKHDLDYLKDTWTVITGGTDGIGKAYIEELCKTRGLKKFYLIGRNIDKLNNTKKELVEQHGCEVMCHVHDFEKDDLSALPKDLETLDVGILINCAGIAPHIIGTLTELPEGLASKILRVNLMSAVKMTEMILPNMVKKKRGIIVNISSMTGWRRFRTSVLTRLAKLHYPSSPTPCQMNTEELEFVFSVSFQCSLLPRSPRMKLKKRTISSLSPLKTLPNKLSELSGLIGKSQRAVCNMMFRLPLEHCSPFGFSKYFSSLLLCSEFISIVLPLIKRRTRERIIRVFIISRLSIFVHFYHDFFLLNAIFQIKKFSCELNFLESFF.

Residue 503–534 (DTWTVITGGTDGIGKAYIEELCKTRGLKKFYL) participates in NADP(+) binding. Serine 641 contributes to the substrate binding site. The Proton acceptor role is filled by tyrosine 661. The next 2 membrane-spanning stretches (helical) occupy residues 743–763 (FGFS…SIVL) and 777–797 (VFII…FLLN).

Belongs to the short-chain dehydrogenases/reductases (SDR) family.

The protein resides in the membrane. This is an uncharacterized protein from Caenorhabditis elegans.